A 140-amino-acid chain; its full sequence is 3-hydroxyacyl-[acyl-carrier-protein] dehydratase FabZ (140 aa).

The active site involves histidine 48.

Belongs to the thioester dehydratase family. FabZ subfamily.

The protein resides in the cytoplasm. The enzyme catalyses a (3R)-hydroxyacyl-[ACP] = a (2E)-enoyl-[ACP] + H2O. Functionally, involved in unsaturated fatty acids biosynthesis. Catalyzes the dehydration of short chain beta-hydroxyacyl-ACPs and long chain saturated and unsaturated beta-hydroxyacyl-ACPs. The chain is 3-hydroxyacyl-[acyl-carrier-protein] dehydratase FabZ from Oceanobacillus iheyensis (strain DSM 14371 / CIP 107618 / JCM 11309 / KCTC 3954 / HTE831).